A 324-amino-acid chain; its full sequence is Olfactory receptor 5T17 (324 aa).

At 1 to 37 (MPRTPSYTNTKTTQVNNVTEITVFILLGFTDDVDMNI) the chain is on the extracellular side. N-linked (GlcNAc...) asparagine glycosylation occurs at N17. Residues 38-58 (FLFILFLAIYVVTLIGNLGLV) traverse the membrane as a helical segment. The Cytoplasmic segment spans residues 59 to 66 (VLVIEDSR). A helical membrane pass occupies residues 67–87 (LHNPMYYFLTVLSSLDACFSS). Residues 88–111 (VLTPKMLVNFLSKNKSISFAGCAT) are Extracellular-facing. An N-linked (GlcNAc...) asparagine glycan is attached at N101. C109 and C201 are disulfide-bonded. Residues 112 to 132 (QMLLFVTFGTTECFLLAAMAY) traverse the membrane as a helical segment. Topologically, residues 133–145 (DRYLAIYSPLLYA) are cytoplasmic. Residues 146 to 166 (VRMSPRVYVPLIIASYTGGIL) traverse the membrane as a helical segment. Topologically, residues 167-208 (HATIHTVATFSLSFCGSNEIRHVFCDIPPLLALSCSDTHLNQ) are extracellular. The helical transmembrane segment at 209-229 (LLLFYCAGSIELITILIVLVS) threads the bilayer. The Cytoplasmic segment spans residues 230-249 (YGFVLLAILKINSAEGRRKI). The helical transmembrane segment at 250 to 270 (FSTCGAHLTGVSIFHGTILFM) threads the bilayer. Over 271-283 (YVRPSSNYTLEQD) the chain is Extracellular. N-linked (GlcNAc...) asparagine glycosylation is present at N277. A helical membrane pass occupies residues 284–304 (MVVSTFYTIVIPMLNPIIYSL). Topologically, residues 305–324 (RNKDVKEAMRKLLKRKLVHE) are cytoplasmic.

The protein belongs to the G-protein coupled receptor 1 family.

The protein resides in the cell membrane. Functionally, potential odorant receptor. This is Olfactory receptor 5T17 from Mus musculus (Mouse).